Reading from the N-terminus, the 160-residue chain is NADH-quinone oxidoreductase subunit B (160 aa).

Residues Cys37, Cys38, Cys102, and Cys132 each coordinate [4Fe-4S] cluster.

The protein belongs to the complex I 20 kDa subunit family. NDH-1 is composed of 14 different subunits. Subunits NuoB, C, D, E, F, and G constitute the peripheral sector of the complex. It depends on [4Fe-4S] cluster as a cofactor.

Its subcellular location is the cell inner membrane. The enzyme catalyses a quinone + NADH + 5 H(+)(in) = a quinol + NAD(+) + 4 H(+)(out). Functionally, NDH-1 shuttles electrons from NADH, via FMN and iron-sulfur (Fe-S) centers, to quinones in the respiratory chain. Couples the redox reaction to proton translocation (for every two electrons transferred, four hydrogen ions are translocated across the cytoplasmic membrane), and thus conserves the redox energy in a proton gradient. This chain is NADH-quinone oxidoreductase subunit B, found in Neisseria gonorrhoeae (strain ATCC 700825 / FA 1090).